We begin with the raw amino-acid sequence, 243 residues long: MNSKQDRIYAKPAQTISDFQFDSRVAGVFNDMIRRSVPGYNQIIATLGDFARRYVTPNSKVFDLGSSLGSATLSIRRQIEGRQCQIIAIDNSQSMIERCEENLAAYVSDTQVTLVCDDIRNVDINNASMVVLNFTLQFLPPEDRDTLIKRIYDGMLPGGILVLSEKVKFDDACIQTLLDEQHLDFKRANGYSELEISQKRSALENVMRTDTLVQHQQRITDSGFSHFSVWFQCFNFASMVAIK.

S-adenosyl-L-methionine-binding positions include tyrosine 40, 65 to 67 (GSS), 90 to 91 (DN), 118 to 119 (DI), asparagine 133, and arginine 200.

It belongs to the class I-like SAM-binding methyltransferase superfamily. Cx-SAM synthase family. Homodimer.

It catalyses the reaction prephenate + S-adenosyl-L-methionine = carboxy-S-adenosyl-L-methionine + 3-phenylpyruvate + H2O. Functionally, catalyzes the conversion of S-adenosyl-L-methionine (SAM) to carboxy-S-adenosyl-L-methionine (Cx-SAM). The sequence is that of Carboxy-S-adenosyl-L-methionine synthase from Shewanella denitrificans (strain OS217 / ATCC BAA-1090 / DSM 15013).